Reading from the N-terminus, the 79-residue chain is UPF0654 protein C11D3.01c (79 aa).

The interval 1 to 79 is disordered; sequence MPNPGNVIGG…RAQEELENLE (79 aa). Over residues 22–45 the composition is skewed to basic and acidic residues; the sequence is EETKQREKEYLEEHEGEVGEEHQK.

Belongs to the UPF0654 (con-6) family.

The polypeptide is UPF0654 protein C11D3.01c (Schizosaccharomyces pombe (strain 972 / ATCC 24843) (Fission yeast)).